Reading from the N-terminus, the 192-residue chain is Erythropoietin (192 aa).

The signal sequence occupies residues 1–26 (MGVPERPTLLLLLSLLLLPLGLPVLC). Cysteine 33 and cysteine 187 are disulfide-bonded. N-linked (GlcNAc...) asparagine glycosylation is found at asparagine 50, asparagine 64, and asparagine 109.

This sequence belongs to the EPO/TPO family. In terms of tissue distribution, produced by kidney or liver of adult mammals and by liver of fetal or neonatal mammals.

Its subcellular location is the secreted. In terms of biological role, hormone involved in the regulation of erythrocyte proliferation and differentiation and the maintenance of a physiological level of circulating erythrocyte mass. Binds to EPOR leading to EPOR dimerization and JAK2 activation thereby activating specific downstream effectors, including STAT1 and STAT3. The protein is Erythropoietin (EPO) of Alexandromys oeconomus (Tundra vole).